Here is a 193-residue protein sequence, read N- to C-terminus: Probable GTP-binding protein EngB (193 aa).

The 172-residue stretch at 22-193 (QLPEFALAGR…EAWGALQKWM (172 aa)) folds into the EngB-type G domain. GTP-binding positions include 30–37 (GRSNVGKS), 57–61 (GKTQT), 75–78 (DVPG), 142–145 (TKAD), and 174–176 (FSA). 2 residues coordinate Mg(2+): S37 and T59.

This sequence belongs to the TRAFAC class TrmE-Era-EngA-EngB-Septin-like GTPase superfamily. EngB GTPase family. The cofactor is Mg(2+).

In terms of biological role, necessary for normal cell division and for the maintenance of normal septation. This chain is Probable GTP-binding protein EngB, found in Anoxybacillus flavithermus (strain DSM 21510 / WK1).